We begin with the raw amino-acid sequence, 418 residues long: Ankyrin repeat domain-containing protein 61 (418 aa).

ANK repeat units follow at residues Ala27–Leu57, Gln74–Val103, Thr131–Ala160, Asn166–Ala195, Ser199–Cys228, Thr233–Ala272, Glu276–Ile305, and Asn309–Leu342.

In Rattus norvegicus (Rat), this protein is Ankyrin repeat domain-containing protein 61 (Ankrd61).